A 65-amino-acid chain; its full sequence is Large ribosomal subunit protein bL35 (65 aa).

Belongs to the bacterial ribosomal protein bL35 family.

The polypeptide is Large ribosomal subunit protein bL35 (Baumannia cicadellinicola subsp. Homalodisca coagulata).